A 63-amino-acid polypeptide reads, in one-letter code: Large ribosomal subunit protein bL32 (63 aa).

The segment covering 1–18 (MAHPKRRISRSRRDKRRA) has biased composition (basic residues). The tract at residues 1–27 (MAHPKRRISRSRRDKRRAQYNAKTKAP) is disordered.

Belongs to the bacterial ribosomal protein bL32 family.

The chain is Large ribosomal subunit protein bL32 from Chloroherpeton thalassium (strain ATCC 35110 / GB-78).